The following is a 252-amino-acid chain: Large ribosomal subunit protein uL4 (252 aa).

It belongs to the universal ribosomal protein uL4 family. In terms of assembly, part of the 50S ribosomal subunit.

Functionally, one of the primary rRNA binding proteins, this protein initially binds near the 5'-end of the 23S rRNA. It is important during the early stages of 50S assembly. It makes multiple contacts with different domains of the 23S rRNA in the assembled 50S subunit and ribosome. Forms part of the polypeptide exit tunnel. The sequence is that of Large ribosomal subunit protein uL4 from Methanococcus maripaludis (strain C7 / ATCC BAA-1331).